Here is a 384-residue protein sequence, read N- to C-terminus: 8-amino-7-oxononanoate synthase (384 aa).

Residue R21 coordinates substrate. Residue 108-109 (GF) coordinates pyridoxal 5'-phosphate. A substrate-binding site is contributed by H133. Pyridoxal 5'-phosphate-binding residues include S179, H207, and T233. K236 is modified (N6-(pyridoxal phosphate)lysine). T352 serves as a coordination point for substrate.

The protein belongs to the class-II pyridoxal-phosphate-dependent aminotransferase family. BioF subfamily. As to quaternary structure, homodimer. Requires pyridoxal 5'-phosphate as cofactor.

It carries out the reaction 6-carboxyhexanoyl-[ACP] + L-alanine + H(+) = (8S)-8-amino-7-oxononanoate + holo-[ACP] + CO2. The protein operates within cofactor biosynthesis; biotin biosynthesis. Functionally, catalyzes the decarboxylative condensation of pimeloyl-[acyl-carrier protein] and L-alanine to produce 8-amino-7-oxononanoate (AON), [acyl-carrier protein], and carbon dioxide. This Escherichia coli O6:K15:H31 (strain 536 / UPEC) protein is 8-amino-7-oxononanoate synthase.